A 148-amino-acid polypeptide reads, in one-letter code: SsrA-binding protein (148 aa).

The tract at residues 123–148 is disordered; that stretch reads KLHDKRETEKKRDWEREKARIMRSAT. Over residues 126 to 142 the composition is skewed to basic and acidic residues; sequence DKRETEKKRDWEREKAR.

Belongs to the SmpB family.

The protein resides in the cytoplasm. Functionally, required for rescue of stalled ribosomes mediated by trans-translation. Binds to transfer-messenger RNA (tmRNA), required for stable association of tmRNA with ribosomes. tmRNA and SmpB together mimic tRNA shape, replacing the anticodon stem-loop with SmpB. tmRNA is encoded by the ssrA gene; the 2 termini fold to resemble tRNA(Ala) and it encodes a 'tag peptide', a short internal open reading frame. During trans-translation Ala-aminoacylated tmRNA acts like a tRNA, entering the A-site of stalled ribosomes, displacing the stalled mRNA. The ribosome then switches to translate the ORF on the tmRNA; the nascent peptide is terminated with the 'tag peptide' encoded by the tmRNA and targeted for degradation. The ribosome is freed to recommence translation, which seems to be the essential function of trans-translation. The sequence is that of SsrA-binding protein from Burkholderia pseudomallei (strain 1710b).